A 294-amino-acid chain; its full sequence is Protease HtpX (294 aa).

Transmembrane regions (helical) follow at residues 4 to 24 (IALFLLTNLAVMVVFGLVLSL) and 34 to 52 (GLLIMALLFGFGGSIVSLM). A Zn(2+)-binding site is contributed by H139. The active site involves E140. Residue H143 participates in Zn(2+) binding. A run of 2 helical transmembrane segments spans residues 158-178 (VVNTFVIFISRVIAQIAAGFL) and 194-214 (LIYFAVATVLELVFGILASII). E223 serves as a coordination point for Zn(2+).

Belongs to the peptidase M48B family. Requires Zn(2+) as cofactor.

It localises to the cell inner membrane. The sequence is that of Protease HtpX from Klebsiella pneumoniae subsp. pneumoniae (strain ATCC 700721 / MGH 78578).